The sequence spans 540 residues: Sterol 14-alpha demethylase (540 aa).

A helical membrane pass occupies residues 41-61 (PLFLVSGFLGVCVAYAVANII). Cys485 is a binding site for heme.

This sequence belongs to the cytochrome P450 family. Requires heme as cofactor.

The protein resides in the membrane. The catalysed reaction is a 14alpha-methyl steroid + 3 reduced [NADPH--hemoprotein reductase] + 3 O2 = a Delta(14) steroid + formate + 3 oxidized [NADPH--hemoprotein reductase] + 4 H2O + 4 H(+). It carries out the reaction a 14alpha-methyl steroid + reduced [NADPH--hemoprotein reductase] + O2 = a 14alpha-hydroxymethyl steroid + oxidized [NADPH--hemoprotein reductase] + H2O + H(+). It catalyses the reaction a 14alpha-hydroxymethyl steroid + reduced [NADPH--hemoprotein reductase] + O2 = a 14alpha-formyl steroid + oxidized [NADPH--hemoprotein reductase] + 2 H2O + H(+). The enzyme catalyses a 14alpha-formyl steroid + reduced [NADPH--hemoprotein reductase] + O2 = a Delta(14) steroid + formate + oxidized [NADPH--hemoprotein reductase] + H2O + 2 H(+). The catalysed reaction is lanosterol + 3 reduced [NADPH--hemoprotein reductase] + 3 O2 = 4,4-dimethyl-5alpha-cholesta-8,14,24-trien-3beta-ol + formate + 3 oxidized [NADPH--hemoprotein reductase] + 4 H2O + 4 H(+). It carries out the reaction lanosterol + reduced [NADPH--hemoprotein reductase] + O2 = 32-hydroxylanosterol + oxidized [NADPH--hemoprotein reductase] + H2O + H(+). It catalyses the reaction 32-hydroxylanosterol + reduced [NADPH--hemoprotein reductase] + O2 = 32-oxolanosterol + oxidized [NADPH--hemoprotein reductase] + 2 H2O + H(+). The enzyme catalyses 32-oxolanosterol + reduced [NADPH--hemoprotein reductase] + O2 = 4,4-dimethyl-5alpha-cholesta-8,14,24-trien-3beta-ol + formate + oxidized [NADPH--hemoprotein reductase] + H2O + 2 H(+). The catalysed reaction is eburicol + 3 reduced [NADPH--hemoprotein reductase] + 3 O2 = 14-demethyleburicol + formate + 3 oxidized [NADPH--hemoprotein reductase] + 4 H2O + 4 H(+). It carries out the reaction eburicol + reduced [NADPH--hemoprotein reductase] + O2 = 32-hydroxyeburicol + oxidized [NADPH--hemoprotein reductase] + H2O + H(+). It catalyses the reaction 32-hydroxyeburicol + reduced [NADPH--hemoprotein reductase] + O2 = 32-oxoeburicol + oxidized [NADPH--hemoprotein reductase] + 2 H2O + H(+). The enzyme catalyses 32-oxoeburicol + reduced [NADPH--hemoprotein reductase] + O2 = 14-demethyleburicol + formate + oxidized [NADPH--hemoprotein reductase] + H2O + 2 H(+). It functions in the pathway steroid biosynthesis; sterol biosynthesis. Sterol 14-alpha demethylase; part of the gene cluster that mediates the biosynthesis of tetrahydropyranyl antifungal agent lanomycin that acts as an inhibitor of CYP51 and blocks the ergosterol biosynthesis. Sterol 14-alpha-demethylase plays a critical role in the biosynthesis of ergosterol, the major sterol component in fungal membranes that participates in a variety of functions. Acts as a self-resistant CYP51 that contains mutations found in CYP51s isolated from azole resistance strains and that is not inhibited by the final product of the cluster, lanomycin. This chain is Sterol 14-alpha demethylase, found in Pyrenophora dematioidea (Helminthosporium dematioideum).